A 42-amino-acid chain; its full sequence is Potassium channel toxin gamma-KTx 1.5 (42 aa).

4 disulfide bridges follow: Cys5/Cys23, Cys11/Cys34, Cys20/Cys39, and Cys24/Cys41.

This sequence belongs to the ergtoxin family. Gamma-KTx 1 subfamily. As to expression, expressed by the venom gland.

It localises to the secreted. Functionally, blocks Kv11/ERG potassium channels. The sequence is that of Potassium channel toxin gamma-KTx 1.5 from Centruroides limpidus (Mexican scorpion).